A 268-amino-acid chain; its full sequence is Tryptophan synthase alpha chain (268 aa).

Catalysis depends on proton acceptor residues E49 and D60.

Belongs to the TrpA family. Tetramer of two alpha and two beta chains.

The catalysed reaction is (1S,2R)-1-C-(indol-3-yl)glycerol 3-phosphate + L-serine = D-glyceraldehyde 3-phosphate + L-tryptophan + H2O. It participates in amino-acid biosynthesis; L-tryptophan biosynthesis; L-tryptophan from chorismate: step 5/5. Functionally, the alpha subunit is responsible for the aldol cleavage of indoleglycerol phosphate to indole and glyceraldehyde 3-phosphate. This is Tryptophan synthase alpha chain from Escherichia coli (strain SE11).